Reading from the N-terminus, the 1942-residue chain is GREB1-like protein (1942 aa).

Disordered stretches follow at residues 76–101, 235–306, 325–373, and 1123–1256; these read SSNSVEDMDDEDDSDTSSPPLPYLQG, PFSN…GTKT, MDGR…HRSW, and TKTA…RTQV. Positions 81–90 are enriched in acidic residues; the sequence is EDMDDEDDSD. Positions 237 to 253 are enriched in low complexity; that stretch reads SNSASSSKPSSSSSLSS. The segment covering 338–362 has biased composition (polar residues); it reads NPLSTPSHGYRTTETGDSPASTAMS. Over residues 1127-1155 the composition is skewed to basic and acidic residues; sequence TSREERPREGERSSGETAEHDDLPMELER. Residues 1158–1171 show a composition bias toward low complexity; it reads SNASAATRTSGSTT. Over residues 1172–1202 the composition is skewed to polar residues; the sequence is ENGVSSSSILDKPSSQSDPCGSRTMMDSCSS. Residues 1212–1248 are compositionally biased toward low complexity; sequence SQAPSSSSTSSFSSASSSSSSSSSPAAQRPSQSTQAP. A helical membrane pass occupies residues 1861 to 1881; it reads GVIFSGLLLYLCDSFVVSSLL.

Belongs to the GREB1 family.

The protein resides in the membrane. Functionally, plays a major role in early metanephros development. This chain is GREB1-like protein (greb1l), found in Danio rerio (Zebrafish).